The primary structure comprises 479 residues: Preferentially expressed antigen in melanoma-like protein 7 (479 aa).

The stretch at 96–124 is one LRR 1; degenerate repeat; the sequence is MGRLKKVDFRDAQHHASLDMQDEREGRDY. One copy of the LRR 2; degenerate repeat lies at 179–203; that stretch reads HLCCEKLEIGAVEVSKVRNVLKFLQ. An LRR 3; degenerate repeat occupies 204-230; the sequence is PELIKELKLNTVGNLSKLAKFVPFIRK. The LRR 4; degenerate repeat unit spans residues 231 to 265; sequence MRNLQKLMLVRTFGTRTFTQEEKQNISKIISLFCK. LRR repeat units lie at residues 266 to 291, 292 to 323, 324 to 347, 348 to 375, and 376 to 400; these read LSCLRHLTIDDVYFLTDQMKELLRCL, EAPLVSLKITLCQLSQSDLESFAQRWNYSQLK, HLCLRGVTLTNLDVTPLRDFLKRV, AANLQTLDLEDCRMDDSHFRTLLPALIK, and CTQLTSINLYDNDISEDVLENFLHR.

It belongs to the PRAME family. Interacts with UHRF1. As to expression, seems to be specific to pluripotent tissues in the early embryo. Not detected in somatic tissues.

Its function is as follows. Promotes maintenance and self-renewal of pluripotent embryonic stem cells (ESCs), downstream of LIF/STAT3. Maintains the pluripotency state of ESCs by repressing DNA methylation through the regulation of UHRF1 stability. Mediates the proteasomal degradation of UHRF1. Is required for the establishment of the blastocyst. The chain is Preferentially expressed antigen in melanoma-like protein 7 from Mus musculus (Mouse).